A 331-amino-acid chain; its full sequence is RNA 3'-terminal phosphate cyclase (331 aa).

ATP contacts are provided by residues Gln100 and His276–Gln280. His301 functions as the Tele-AMP-histidine intermediate in the catalytic mechanism.

The protein belongs to the RNA 3'-terminal cyclase family. Type 1 subfamily.

Its subcellular location is the cytoplasm. The enzyme catalyses a 3'-end 3'-phospho-ribonucleotide-RNA + ATP = a 3'-end 2',3'-cyclophospho-ribonucleotide-RNA + AMP + diphosphate. Functionally, catalyzes the conversion of 3'-phosphate to a 2',3'-cyclic phosphodiester at the end of RNA. The mechanism of action of the enzyme occurs in 3 steps: (A) adenylation of the enzyme by ATP; (B) transfer of adenylate to an RNA-N3'P to produce RNA-N3'PP5'A; (C) and attack of the adjacent 2'-hydroxyl on the 3'-phosphorus in the diester linkage to produce the cyclic end product. The biological role of this enzyme is unknown but it is likely to function in some aspects of cellular RNA processing. The sequence is that of RNA 3'-terminal phosphate cyclase from Methanococcoides burtonii (strain DSM 6242 / NBRC 107633 / OCM 468 / ACE-M).